The primary structure comprises 124 residues: Urotensin-2 (124 aa).

Positions 1-20 are cleaved as a signal peptide; sequence MYKLASCCLLFIGFLNPLLS. Residues 21-110 constitute a propeptide that is removed on maturation; the sequence is LPLLDSREIS…HLLARIWKPY (90 aa). Residues C118 and C123 are joined by a disulfide bond.

The protein belongs to the urotensin-2 family. Brain specific.

The protein localises to the secreted. Highly potent vasoconstrictor. This is Urotensin-2 (UTS2) from Homo sapiens (Human).